A 26-amino-acid polypeptide reads, in one-letter code: Toxin b subunit alpha (26 aa).

As to quaternary structure, toxin b is a heterodimer composed of toxin alpha and toxin beta. In terms of tissue distribution, expressed by the venom gland.

Its subcellular location is the secreted. In terms of biological role, binds to sodium channels (Nav) and affects the channel activation process. This Androctonus crassicauda (Arabian fat-tailed scorpion) protein is Toxin b subunit alpha.